A 336-amino-acid polypeptide reads, in one-letter code: Flap endonuclease 1 (336 aa).

The N-domain stretch occupies residues 1–98; that stretch reads MGADIGDLFE…AEIEERKKRR (98 aa). Mg(2+)-binding residues include Asp27, Asp80, Glu151, Glu153, Asp172, Asp174, and Asp235. Residues 115–256 form an I-domain region; the sequence is DAKKYAQAAG…KALNYIKTYG (142 aa). The interaction with PCNA stretch occupies residues 328-336; sequence TQATLERWF.

Belongs to the XPG/RAD2 endonuclease family. FEN1 subfamily. Interacts with PCNA. PCNA stimulates the nuclease activity without altering cleavage specificity. Mg(2+) serves as cofactor.

Structure-specific nuclease with 5'-flap endonuclease and 5'-3' exonuclease activities involved in DNA replication and repair. During DNA replication, cleaves the 5'-overhanging flap structure that is generated by displacement synthesis when DNA polymerase encounters the 5'-end of a downstream Okazaki fragment. Binds the unpaired 3'-DNA end and kinks the DNA to facilitate 5' cleavage specificity. Cleaves one nucleotide into the double-stranded DNA from the junction in flap DNA, leaving a nick for ligation. Also involved in the base excision repair (BER) pathway. Acts as a genome stabilization factor that prevents flaps from equilibrating into structures that lead to duplications and deletions. Also possesses 5'-3' exonuclease activity on nicked or gapped double-stranded DNA. The chain is Flap endonuclease 1 from Archaeoglobus fulgidus (strain ATCC 49558 / DSM 4304 / JCM 9628 / NBRC 100126 / VC-16).